The chain runs to 425 residues: Glutamyl-tRNA reductase (425 aa).

Substrate-binding positions include 49–52, S107, 112–114, and Q118; these read TCNR and EPQ. The active-site Nucleophile is the C50. 187 to 192 is a binding site for NADP(+); sequence GAGETI.

This sequence belongs to the glutamyl-tRNA reductase family. As to quaternary structure, homodimer.

The enzyme catalyses (S)-4-amino-5-oxopentanoate + tRNA(Glu) + NADP(+) = L-glutamyl-tRNA(Glu) + NADPH + H(+). The protein operates within porphyrin-containing compound metabolism; protoporphyrin-IX biosynthesis; 5-aminolevulinate from L-glutamyl-tRNA(Glu): step 1/2. Functionally, catalyzes the NADPH-dependent reduction of glutamyl-tRNA(Glu) to glutamate 1-semialdehyde (GSA). This chain is Glutamyl-tRNA reductase, found in Pseudomonas entomophila (strain L48).